Consider the following 250-residue polypeptide: Ubiquinone/menaquinone biosynthesis C-methyltransferase UbiE (250 aa).

S-adenosyl-L-methionine-binding positions include Ser-73, Asp-94, and 122-123; that span reads NA.

It belongs to the class I-like SAM-binding methyltransferase superfamily. MenG/UbiE family.

The catalysed reaction is a 2-demethylmenaquinol + S-adenosyl-L-methionine = a menaquinol + S-adenosyl-L-homocysteine + H(+). It catalyses the reaction a 2-methoxy-6-(all-trans-polyprenyl)benzene-1,4-diol + S-adenosyl-L-methionine = a 5-methoxy-2-methyl-3-(all-trans-polyprenyl)benzene-1,4-diol + S-adenosyl-L-homocysteine + H(+). It participates in quinol/quinone metabolism; menaquinone biosynthesis; menaquinol from 1,4-dihydroxy-2-naphthoate: step 2/2. It functions in the pathway cofactor biosynthesis; ubiquinone biosynthesis. Functionally, methyltransferase required for the conversion of demethylmenaquinol (DMKH2) to menaquinol (MKH2) and the conversion of 2-polyprenyl-6-methoxy-1,4-benzoquinol (DDMQH2) to 2-polyprenyl-3-methyl-6-methoxy-1,4-benzoquinol (DMQH2). The protein is Ubiquinone/menaquinone biosynthesis C-methyltransferase UbiE of Legionella pneumophila (strain Paris).